The primary structure comprises 733 residues: Alpha-galactosidase 1 (733 aa).

Asp-480 functions as the Nucleophile in the catalytic mechanism. Asp-550 acts as the Proton donor in catalysis.

This sequence belongs to the glycosyl hydrolase 36 family.

The catalysed reaction is Hydrolysis of terminal, non-reducing alpha-D-galactose residues in alpha-D-galactosides, including galactose oligosaccharides, galactomannans and galactolipids.. In terms of biological role, alpha-galactosidase associated with the raffinose operon. The chain is Alpha-galactosidase 1 (agaR) from Pediococcus pentosaceus.